The following is a 437-amino-acid chain: MEVDGETQIEELECDIRTLRKQLKAKVQQLKTLKKHFQKNCINKLNNNEIARYSRQIILSEIGVQGQLKLKRSSVLVVGAGGLGCPSALYLAGAGIGRIGILDYDEVELTNLHRQLLHTECSVGLTKVESVRSYLEELNSQIEIVTHHIQLTSDNALQTLESYDIVVDATDNVATRYLLNDACVLLKKPLVSGSALQLEGQLTVYNFNGGPCYRCLFPNPPPPETVTNCGDGGVLGAITGVIGALQALETIKIILGNSGVLSGRLLLFDGHQSTFRNLKLRPKKADCAVCSDNPSLTKLIDYEQFCSMKATDKDSHLNLLAPHERITVQEYKSLAESNVPHLLVDVRGANQFEICQLPASINVPIDDILKNRRTAEVTQLAATGGPVFVVCRRGNDSQLAVRHLSQLFQEQGLAPPRDIVGGLHAWTHNIDPEFPIY.

Residues Gly-82, Asp-103, 110-114 (TNLHR), Lys-127, and 171-172 (DN) contribute to the ATP site. Zn(2+) contacts are provided by Cys-212 and Cys-215. Cys-229 (glycyl thioester intermediate; for adenylyltransferase activity) is an active-site residue. Residues Cys-287 and Cys-290 each coordinate Zn(2+). Residues 337–435 (SNVPHLLVDV…WTHNIDPEFP (99 aa)) enclose the Rhodanese domain. Cys-391 serves as the catalytic Cysteine persulfide intermediate; for sulfurtransferase activity.

This sequence in the N-terminal section; belongs to the HesA/MoeB/ThiF family. UBA4 subfamily. The cofactor is Zn(2+).

It is found in the cytoplasm. Its subcellular location is the cytosol. The catalysed reaction is [molybdopterin-synthase sulfur-carrier protein]-C-terminal Gly-Gly + ATP + H(+) = [molybdopterin-synthase sulfur-carrier protein]-C-terminal Gly-Gly-AMP + diphosphate. It carries out the reaction [molybdopterin-synthase sulfur-carrier protein]-C-terminal Gly-Gly-AMP + S-sulfanyl-L-cysteinyl-[cysteine desulfurase] + AH2 = [molybdopterin-synthase sulfur-carrier protein]-C-terminal-Gly-aminoethanethioate + L-cysteinyl-[cysteine desulfurase] + A + AMP + 2 H(+). Its pathway is tRNA modification; 5-methoxycarbonylmethyl-2-thiouridine-tRNA biosynthesis. It functions in the pathway cofactor biosynthesis; molybdopterin biosynthesis. In terms of biological role, plays a central role in 2-thiolation of mcm(5)S(2)U at tRNA wobble positions of cytosolic tRNA(Lys), tRNA(Glu) and tRNA(Gln). Also essential during biosynthesis of the molybdenum cofactor. Acts by mediating the C-terminal thiocarboxylation of sulfur carriers URM1 and MOCS2A. Its N-terminus first activates URM1 and MOCS2A as acyl-adenylates (-COAMP), then the persulfide sulfur on the catalytic cysteine is transferred to URM1 and MOCS2A to form thiocarboxylation (-COSH) of their C-terminus. The reaction probably involves hydrogen sulfide that is generated from the persulfide intermediate and that acts as a nucleophile towards URM1 and MOCS2A. Subsequently, a transient disulfide bond is formed. Does not use thiosulfate as sulfur donor; NFS1 probably acting as a sulfur donor for thiocarboxylation reactions. This Aedes aegypti (Yellowfever mosquito) protein is Adenylyltransferase and sulfurtransferase MOCS3.